Consider the following 383-residue polypeptide: Putative glutamate--cysteine ligase 2 (383 aa).

This sequence belongs to the glutamate--cysteine ligase type 2 family. YbdK subfamily.

The catalysed reaction is L-cysteine + L-glutamate + ATP = gamma-L-glutamyl-L-cysteine + ADP + phosphate + H(+). Functionally, ATP-dependent carboxylate-amine ligase which exhibits weak glutamate--cysteine ligase activity. This is Putative glutamate--cysteine ligase 2 from Legionella pneumophila subsp. pneumophila (strain Philadelphia 1 / ATCC 33152 / DSM 7513).